The sequence spans 295 residues: Nucleotide-binding protein LACR_1047 (295 aa).

ATP is bound at residue 12–19 (GMSGAGKT). 63 to 66 (DMRS) serves as a coordination point for GTP.

Belongs to the RapZ-like family.

Its function is as follows. Displays ATPase and GTPase activities. This chain is Nucleotide-binding protein LACR_1047, found in Lactococcus lactis subsp. cremoris (strain SK11).